The following is a 705-amino-acid chain: GATOR2 complex protein WDR24 (705 aa).

6 WD repeats span residues 1-28 (MDENLLATAATNGVVVTWNLGKPSRNKQ), 34-74 (EHKR…SVST), 77-117 (GQSE…RYER), 121-161 (AHNG…AKEI), 165-207 (QTIA…IPSA), and 211-254 (EHKD…IDRA). A C4-type zinc finger spans residues 633 to 655 (NCSNCKRPMSNRGWICDRCRQCA). Zn(2+)-binding residues include Cys-634, Cys-637, Cys-648, Cys-651, Cys-658, Cys-661, Cys-672, Cys-675, His-677, His-680, His-683, Cys-694, Cys-698, His-700, and Cys-702. The segment at 656–705 (SMCAVCHHVVKGLFVWCQGCSHGGHLQHIMKWLETSSHCPAGCGHLCEYT) adopts an RING-type; atypical zinc-finger fold.

Belongs to the WD repeat WDR24 family. As to quaternary structure, component of the GATOR2 subcomplex, composed of MIOS, SEC13, SEH1L, WDR24 and WDR59. The GATOR2 complex interacts with CASTOR1 and CASTOR2; the interaction is negatively regulated by arginine. The GATOR2 complex interacts with SESN1, SESN2 and SESN3; the interaction is negatively regulated by amino acids.

The protein resides in the lysosome membrane. It carries out the reaction S-ubiquitinyl-[E2 ubiquitin-conjugating enzyme]-L-cysteine + [acceptor protein]-L-lysine = [E2 ubiquitin-conjugating enzyme]-L-cysteine + N(6)-ubiquitinyl-[acceptor protein]-L-lysine.. It functions in the pathway protein modification; protein ubiquitination. With respect to regulation, the GATOR2 complex is negatively regulated by the upstream amino acid sensors CASTOR1 and SESN2, which sequester the GATOR2 complex in absence of amino acids. In the presence of abundant amino acids, GATOR2 is released from CASTOR1 and SESN2 and activated. Catalytic component of the GATOR2 complex, a multiprotein complex that acts as an activator of the amino acid-sensing branch of the mTORC1 signaling pathway. The GATOR2 complex indirectly activates mTORC1 through the inhibition of the GATOR1 subcomplex. GATOR2 probably acts as an E3 ubiquitin-protein ligase toward GATOR1. In the presence of abundant amino acids, the GATOR2 complex mediates ubiquitination of the NPRL2 core component of the GATOR1 complex, leading to GATOR1 inactivation. In the absence of amino acids, GATOR2 is inhibited, activating the GATOR1 complex. In addition to its role in regulation of the mTORC1 complex, promotes the acidification of lysosomes and facilitates autophagic flux. Within the GATOR2 complex, WDR24 constitutes the catalytic subunit that mediates 'Lys-6'-linked ubiquitination of NPRL2. In Gallus gallus (Chicken), this protein is GATOR2 complex protein WDR24.